The following is a 209-amino-acid chain: MKKAILGKKLGMTQIFNENGKVIPVTVIEAGPCTVIQKKTVEKDGYEAIQVAFGDIREKLRNKPVKGHFAKAGVSVKRHIKEFKLEDLNSLEIGQEIKADVFEAGERVDISGVSKGKGFQGTIRRWNAHRGPMSHGSKFHRAVGSMGASSDPSRTFKNKRMPGHMGNVNTTVLNLEVVRIIPEKNLILIKGGVPGPNKGLVQIRNTVKA.

The disordered stretch occupies residues 141–163; that stretch reads RAVGSMGASSDPSRTFKNKRMPG.

Belongs to the universal ribosomal protein uL3 family. In terms of assembly, part of the 50S ribosomal subunit. Forms a cluster with proteins L14 and L19.

In terms of biological role, one of the primary rRNA binding proteins, it binds directly near the 3'-end of the 23S rRNA, where it nucleates assembly of the 50S subunit. The sequence is that of Large ribosomal subunit protein uL3 from Clostridium botulinum (strain Kyoto / Type A2).